We begin with the raw amino-acid sequence, 273 residues long: Undecaprenyl-diphosphatase (273 aa).

The next 7 helical transmembrane spans lie at 6–26, 45–65, 90–110, 116–136, 190–210, 222–242, and 252–272; these read SLLI…LPVS, AKTF…VMFW, LTLI…LLFH, LFNP…LIAA, YAAS…ATAL, GDIP…LIAI, and ISFI…YVVF.

The protein belongs to the UppP family.

Its subcellular location is the cell inner membrane. It carries out the reaction di-trans,octa-cis-undecaprenyl diphosphate + H2O = di-trans,octa-cis-undecaprenyl phosphate + phosphate + H(+). Its function is as follows. Catalyzes the dephosphorylation of undecaprenyl diphosphate (UPP). Confers resistance to bacitracin. The protein is Undecaprenyl-diphosphatase of Escherichia coli O157:H7.